The chain runs to 359 residues: MTIKIAIDCMGGDHGVSVTVPAAISFLSRHDDAEMVLVGLPDAIRTQLKKLHALDHPRVTIVEATEVITMDDPVEVALRKKRDSSMRVAVTQVKEGLAGACISAGNTGALMAVSRYVLKTLEGIERPAIATTIPNEQGWGTTVLDLGANADCEPEHLLQFARMAEAMVAVVDHKEHPTVGLLNIGEEVIKGNEVVKRAGELLRASELNFYGNVEGNDIFKGTTDIVVCDGFVGNVALKSTEGLAKMIGSMIKEEFTRSWFTKLLAAVAMPVLSRLARRLDPARYNGASLLGLRGLVIKSHGSADAHSFEWAIKRGYDAAKNGVIARITRAFADKSSAAGAAQPAPETEVPGAHPSPHVA.

The segment at 337–359 (AAGAAQPAPETEVPGAHPSPHVA) is disordered.

This sequence belongs to the PlsX family. As to quaternary structure, homodimer. Probably interacts with PlsY.

Its subcellular location is the cytoplasm. It catalyses the reaction a fatty acyl-[ACP] + phosphate = an acyl phosphate + holo-[ACP]. It functions in the pathway lipid metabolism; phospholipid metabolism. Its function is as follows. Catalyzes the reversible formation of acyl-phosphate (acyl-PO(4)) from acyl-[acyl-carrier-protein] (acyl-ACP). This enzyme utilizes acyl-ACP as fatty acyl donor, but not acyl-CoA. This is Phosphate acyltransferase from Cupriavidus necator (strain ATCC 17699 / DSM 428 / KCTC 22496 / NCIMB 10442 / H16 / Stanier 337) (Ralstonia eutropha).